The chain runs to 149 residues: Large ribosomal subunit protein uL16 (149 aa).

It belongs to the universal ribosomal protein uL16 family. As to quaternary structure, part of the 50S ribosomal subunit.

Functionally, binds 23S rRNA and is also seen to make contacts with the A and possibly P site tRNAs. This Dehalococcoides mccartyi (strain ATCC BAA-2100 / JCM 16839 / KCTC 5957 / BAV1) protein is Large ribosomal subunit protein uL16.